A 461-amino-acid chain; its full sequence is Steroidogenic factor 1 (461 aa).

Positions 10–85 form a DNA-binding region, nuclear receptor; it reads DELCPVCGDK…VGMRLEAVRA (76 aa). An NR C4-type zinc finger spans residues 13 to 33; that stretch reads CPVCGDKVSGYHYGLLTCESC. An N6-acetyllysine mark is found at lysine 34, lysine 38, and lysine 72. The segment at 49–73 adopts an NR C4-type zinc-finger fold; the sequence is CTESQSCKIDKTQRKRCPFCRFQKC. Residue lysine 119 forms a Glycyl lysine isopeptide (Lys-Gly) (interchain with G-Cter in SUMO) linkage. Positions 119–150 are disordered; it reads KLETGPPMGVAPPPPPPPDYMLPPGLHAPEPK. Positions 127 to 139 are enriched in pro residues; it reads GVAPPPPPPPDYM. Lysine 194 participates in a covalent cross-link: Glycyl lysine isopeptide (Lys-Gly) (interchain with G-Cter in SUMO). Serine 203 is modified (phosphoserine; by CDK7). The NR LBD domain maps to 222 to 459; that stretch reads GVPELIVQLL…NLLIEMLQAK (238 aa). An important for dimerization region spans residues 230–461; it reads LLQLEPDEDQ…LIEMLQAKQT (232 aa). A 1,2-diacyl-sn-glycero-3-phosphocholine is bound by residues glycine 341, tyrosine 436, and lysine 440.

This sequence belongs to the nuclear hormone receptor family. NR5 subfamily. As to quaternary structure, binds DNA as a monomer. Part of a complex consisting of SFPQ, NONO and NR5A1. Interacts with NR0B2, NCOA2 and PPARGC1A. Interacts with DGKQ and CDK7. Binds to and activated by HIPK3. Post-translationally, acetylation stimulates the transcriptional activity. Sumoylation reduces CDK7-mediated phosphorylation on Ser-203. In terms of processing, phosphorylated on Ser-203 by CDK7. This phosphorylation promotes transcriptional activity.

The protein resides in the nucleus. Transcriptional activator. Seems to be essential for sexual differentiation and formation of the primary steroidogenic tissues. Binds to the Ad4 site found in the promoter region of steroidogenic P450 genes such as CYP11A, CYP11B and CYP21B. Also regulates the AMH/Muellerian inhibiting substance gene as well as the AHCH and STAR genes. 5'-YCAAGGYC-3' and 5'-RRAGGTCA-3' are the consensus sequences for the recognition by NR5A1. The SFPQ-NONO-NR5A1 complex binds to the CYP17 promoter and regulates basal and cAMP-dependent transcriptional activity. Binds phosphatidylcholine and phospholipids with a phosphatidylinositol (PI) headgroup, in particular PI(3,4)P2 and PI(3,4,5)P3. Activated by the phosphorylation of NR5A1 by HIPK3 leading to increased steroidogenic gene expression upon cAMP signaling pathway stimulation. This is Steroidogenic factor 1 (NR5A1) from Sus scrofa (Pig).